The following is a 232-amino-acid chain: Alpha N-terminal protein methyltransferase 1 (232 aa).

S-adenosyl-L-methionine contacts are provided by residues glycine 71, arginine 76, 123-124 (MQ), and glutamine 139.

Belongs to the methyltransferase superfamily. NTM1 family.

The protein localises to the cytoplasm. It catalyses the reaction N-terminal L-alanyl-L-prolyl-L-lysyl-[protein] + 3 S-adenosyl-L-methionine = N-terminal N,N,N-trimethyl-L-alanyl-L-prolyl-L-lysyl-[protein] + 3 S-adenosyl-L-homocysteine + 3 H(+). The enzyme catalyses N-terminal L-seryl-L-prolyl-L-lysyl-[protein] + 3 S-adenosyl-L-methionine = N-terminal N,N,N-trimethyl-L-seryl-L-prolyl-L-lysyl-[protein] + 3 S-adenosyl-L-homocysteine + 3 H(+). The catalysed reaction is N-terminal L-prolyl-L-prolyl-L-lysyl-[protein] + 2 S-adenosyl-L-methionine = N-terminal N,N-dimethyl-L-prolyl-L-prolyl-L-lysyl-[protein] + 2 S-adenosyl-L-homocysteine + 2 H(+). Alpha-N-methyltransferase that methylates the N-terminus of target proteins containing the N-terminal motif [Ala/Pro/Ser]-Pro-Lys when the initiator Met is cleaved. Specifically catalyzes mono-, di- or tri-methylation of exposed alpha-amino group of Ala or Ser residue in the [Ala/Ser]-Pro-Lys motif and mono- or di-methylation of Pro in the Pro-Pro-Lys motif. Responsible for the N-terminal methylation of the ribosomal proteins RPL12A, RPL12B, RPS25A and RPS25B. This is Alpha N-terminal protein methyltransferase 1 (TAE1) from Saccharomyces cerevisiae (strain ATCC 204508 / S288c) (Baker's yeast).